The chain runs to 123 residues: UPF0102 protein CLJ_B2665 (123 aa).

Belongs to the UPF0102 family.

The polypeptide is UPF0102 protein CLJ_B2665 (Clostridium botulinum (strain 657 / Type Ba4)).